We begin with the raw amino-acid sequence, 304 residues long: Tritrans,polycis-undecaprenyl-diphosphate synthase (geranylgeranyl-diphosphate specific) (304 aa).

Aspartate 33 is an active-site residue. Aspartate 33 serves as a coordination point for Mg(2+). Substrate contacts are provided by residues 34–37 (GNRR), lysine 46, histidine 50, and 78–80 (STE). Asparagine 81 acts as the Proton acceptor in catalysis. Residues phenylalanine 82, arginine 84, arginine 203, and 209-211 (RTS) each bind substrate.

This sequence belongs to the UPP synthase family. Homodimer. The cofactor is Mg(2+).

It catalyses the reaction geranylgeranyl diphosphate + 7 isopentenyl diphosphate = tri-trans,hepta-cis-undecaprenyl diphosphate + 7 diphosphate. Functionally, catalyzes the sequential condensation of isopentenyl diphosphate (IPP) with geranylgeranyl diphosphate (GGPP) to yield (2Z,6Z,10Z,14Z,18Z,22Z,26Z,30E,34E,38E)-undecaprenyl diphosphate (tritrans,heptacis-UPP). It is probably the precursor of glycosyl carrier lipids. The chain is Tritrans,polycis-undecaprenyl-diphosphate synthase (geranylgeranyl-diphosphate specific) from Haloarcula marismortui (strain ATCC 43049 / DSM 3752 / JCM 8966 / VKM B-1809) (Halobacterium marismortui).